A 72-amino-acid chain; its full sequence is Arrestin-E (72 aa).

The protein belongs to the arrestin family. In terms of tissue distribution, adrenal, cerebral cortex, heart, hypothalamus, intestine, liver, lung, pituitary, retina and testis.

This chain is Arrestin-E (Ear), found in Rattus norvegicus (Rat).